The chain runs to 151 residues: Gametocyte-specific factor 1-like (151 aa).

2 consecutive CHHC U11-48K-type zinc fingers follow at residues 6–33 and 40–67; these read IEIC…RKKN and MASC…VNRS. Zn(2+) is bound by residues C9, H15, H25, C29, C43, H49, H59, and C63. The tract at residues 130–151 is disordered; sequence QESRGGDQCPEDPQTRTRKANF.

This sequence belongs to the UPF0224 (FAM112) family.

This Mus musculus (Mouse) protein is Gametocyte-specific factor 1-like (Gtsf1l).